We begin with the raw amino-acid sequence, 513 residues long: ATP synthase subunit alpha (513 aa).

G169 to T176 provides a ligand contact to ATP.

The protein belongs to the ATPase alpha/beta chains family. As to quaternary structure, F-type ATPases have 2 components, CF(1) - the catalytic core - and CF(0) - the membrane proton channel. CF(1) has five subunits: alpha(3), beta(3), gamma(1), delta(1), epsilon(1). CF(0) has three main subunits: a(1), b(2) and c(9-12). The alpha and beta chains form an alternating ring which encloses part of the gamma chain. CF(1) is attached to CF(0) by a central stalk formed by the gamma and epsilon chains, while a peripheral stalk is formed by the delta and b chains.

It is found in the cell inner membrane. The enzyme catalyses ATP + H2O + 4 H(+)(in) = ADP + phosphate + 5 H(+)(out). Its function is as follows. Produces ATP from ADP in the presence of a proton gradient across the membrane. The alpha chain is a regulatory subunit. This chain is ATP synthase subunit alpha, found in Shewanella sp. (strain MR-4).